The chain runs to 286 residues: MLGRAQRTLKRKVCYSGVGVHFGKAAMLTLEPAEENTGVVFSRHAASEQYIPARLANVCGTGRSTTLSLDGSVISTVEHLLASLYSFGVDNVRIYCSEDEIPIGDGSAQVFMDLIDQAGIQEQEQTVQIARLAHPVYYQYQDTILAAFPSDEFKISYTLHYSHNSTIGTQYRSLVISEESFRKEIAPCRTFALYSELCFLMEKGLIGGGCVGNAVLFKDDGVISLGKLRFPDEPVRHKILDLIGDLSLVGTPFLAHVIAVGSGHSSNIALGNRILEALQHEQELVK.

Positions 79, 237, and 241 each coordinate Zn(2+). His-264 acts as the Proton donor in catalysis.

This sequence belongs to the LpxC family. Zn(2+) is required as a cofactor.

It catalyses the reaction a UDP-3-O-[(3R)-3-hydroxyacyl]-N-acetyl-alpha-D-glucosamine + H2O = a UDP-3-O-[(3R)-3-hydroxyacyl]-alpha-D-glucosamine + acetate. The protein operates within glycolipid biosynthesis; lipid IV(A) biosynthesis; lipid IV(A) from (3R)-3-hydroxytetradecanoyl-[acyl-carrier-protein] and UDP-N-acetyl-alpha-D-glucosamine: step 2/6. Catalyzes the hydrolysis of UDP-3-O-myristoyl-N-acetylglucosamine to form UDP-3-O-myristoylglucosamine and acetate, the committed step in lipid A biosynthesis. This is UDP-3-O-acyl-N-acetylglucosamine deacetylase from Chlamydia trachomatis serovar L2 (strain ATCC VR-902B / DSM 19102 / 434/Bu).